The following is a 686-amino-acid chain: Pollen receptor-like kinase 5 (686 aa).

The signal sequence occupies residues 1-39; that stretch reads MRNWEDPFTLACNTALKKNLPSCIFIIIFISVLCPVAMS. The Extracellular portion of the chain corresponds to 40–283; that stretch reads QVVVPDSDAD…GKKAGSFYTL (244 aa). N-linked (GlcNAc...) asparagine glycosylation is present at N60. LRR repeat units follow at residues 112-135, 136-159, 161-184, 185-208, and 210-230; these read MKNLRTISFMNNNFNGPMPQVKRF, TSLKSLYLSNNRFSGEIPADAFLG, PLLKKILLANNAFRGTIPSSLASL, PMLLELRLNGNQFQGQIPSFQQKD, and KLASFENNDLDGPIPESLRNM. A helical membrane pass occupies residues 284–304; that stretch reads AIILIVIGIILVIIALVFCFV. Topologically, residues 305–686 are cytoplasmic; sequence QSRRRNFLSA…DDDFGFSMNR (382 aa). Residues 328 to 339 show a composition bias toward polar residues; that stretch reads NYHQSTNKNNKP. A disordered region spans residues 328 to 355; it reads NYHQSTNKNNKPAESVNHTRRGSMPDPG. A Protein kinase domain is found at 375-648; sequence RASAEVLGSG…REVVEMVEML (274 aa). Phosphoserine is present on S377. ATP contacts are provided by residues 381 to 389 and K403; that span reads LGSGTFGAS. Phosphoserine occurs at positions 455 and 458. T472 carries the post-translational modification Phosphothreonine. Y542 is modified (phosphotyrosine). The residue at position 545 (S545) is a Phosphoserine.

The protein belongs to the protein kinase superfamily. Ser/Thr protein kinase family. In terms of assembly, interacts with the GRI peptide. Expressed in pollen and/or in flowers. Detected at low levels in leaves.

The protein localises to the cell membrane. It catalyses the reaction L-seryl-[protein] + ATP = O-phospho-L-seryl-[protein] + ADP + H(+). It carries out the reaction L-threonyl-[protein] + ATP = O-phospho-L-threonyl-[protein] + ADP + H(+). Its function is as follows. Receptor-like kinase involved in the control of pollen germination and pollen tube polar growth. The extracellular domain serves as a sensor for peptides derived from GRI. May act as a downstream element for ROS-dependent cell death induced by GRI. This is Pollen receptor-like kinase 5 from Arabidopsis thaliana (Mouse-ear cress).